The primary structure comprises 271 residues: Glutamate racemase (271 aa).

Residues 12-13 (DS) and 44-45 (YG) each bind substrate. C75 acts as the Proton donor/acceptor in catalysis. Substrate is bound at residue 76 to 77 (NS). The active-site Proton donor/acceptor is C185. 186-187 (TH) lines the substrate pocket.

It belongs to the aspartate/glutamate racemases family.

The catalysed reaction is L-glutamate = D-glutamate. Its pathway is cell wall biogenesis; peptidoglycan biosynthesis. Functionally, provides the (R)-glutamate required for cell wall biosynthesis. This chain is Glutamate racemase, found in Mycobacterium bovis (strain ATCC BAA-935 / AF2122/97).